Here is a 342-residue protein sequence, read N- to C-terminus: MDLSEEALAAAAADAEKAFAAAADLDALAVAKTEHLGGKAPLALAQRALGALPKEEKKDAGKRVNVARGRVAEAFEARRAVLLAERDAAVLVAEAIDVTLPARRQQVGARHPITVISERIADVFVAMGWEVAEGPEVETEHFNFDALNFLPDHPARTMQDTFHIAPEGSRQVLRTHTSPVQVRSMLERDLPIYVVCPGRTFRTDELDATHTPVFSQVEGLAVDKGLTMAHLRGTLDAFARALFGPETRTRMRPNYFPFTEPSAEVDVWFPDKKGGAGWVEWGGCGMVNPKVLIASGIDPEVYSGFAFGMGLERTLQFRNGIPDMRDIVEGDVRFTLPFGIQS.

A Mg(2+)-binding site is contributed by Glu-260.

The protein belongs to the class-II aminoacyl-tRNA synthetase family. Phe-tRNA synthetase alpha subunit type 1 subfamily. In terms of assembly, tetramer of two alpha and two beta subunits. The cofactor is Mg(2+).

Its subcellular location is the cytoplasm. It catalyses the reaction tRNA(Phe) + L-phenylalanine + ATP = L-phenylalanyl-tRNA(Phe) + AMP + diphosphate + H(+). The chain is Phenylalanine--tRNA ligase alpha subunit from Nocardia farcinica (strain IFM 10152).